The primary structure comprises 525 residues: MRGSPRNLCRVQGMIEEIVNRLRGKLIVSCQPVPESPFDNVASVVAYARAAEASGASGLRIEGAANVAATAQASTLPVIGLIKRDLDDSPVRITPFLEDVAALCDAGAAIVAVDATDRRRPVPAAELIGEIKRRGRIAMADISTLAEARNALAAGADIIGTTMSGYTGEGPTPKDPDLDLVAHCSRLGSFLIAEGRYNSPQQAGEAIRAGADAVVVGSAITRPEHITGWFRDAVESAAKPSSPVLAFDIGGTKTLAALVRGREILERRVMTTPASVGSESWIGAIASLSADWQGRYQRAAIAVTGRVDGEIWSSLNPETLAIPPDYPLGRRMGAALGAPVEVINDAQAAAWGENRFGAARGRDMVFLTISSGIGGGIVLGGRLIRGARGIAGSLGQVLVAGPSGFVRLETLASGFGIAKMALEAGHAGDARSVFSAAAAGEGWARRILLDAASQLAAAVAGLQAIVDPECIVIGGGVGMADGFLDMLREALGSHSAVMRPDIVAAELGADAGIIGVADLAATYFS.

A manNAc-6-P epimerase region spans residues 1–241; sequence MRGSPRNLCR…DAVESAAKPS (241 aa). The segment at 242-525 is manNAc kinase; that stretch reads SPVLAFDIGG…VADLAATYFS (284 aa). ATP is bound by residues 246-253 and 372-379; these read AFDIGGTK and GIGGGIVL.

It in the N-terminal section; belongs to the NanE family. This sequence in the C-terminal section; belongs to the ROK (NagC/XylR) family. NanK subfamily.

The enzyme catalyses an N-acyl-D-glucosamine 6-phosphate = an N-acyl-D-mannosamine 6-phosphate. The catalysed reaction is an N-acyl-D-mannosamine + ATP = an N-acyl-D-mannosamine 6-phosphate + ADP + H(+). Its pathway is amino-sugar metabolism; N-acetylneuraminate degradation; D-fructose 6-phosphate from N-acetylneuraminate: step 2/5. It participates in amino-sugar metabolism; N-acetylneuraminate degradation; D-fructose 6-phosphate from N-acetylneuraminate: step 3/5. Its function is as follows. Converts N-acetylmannosamine-6-phosphate (ManNAc-6-P) to N-acetylglucosamine-6-phosphate (GlcNAc-6-P). Catalyzes the phosphorylation of N-acetylmannosamine (ManNAc) to ManNAc-6-P. This chain is Bifunctional enzyme NanE/NanK (nanEK), found in Brucella suis biovar 1 (strain 1330).